The primary structure comprises 429 residues: Hemoglobinase (429 aa).

Positions 1–19 (MMLFSLFLISILHILLVKC) are cleaved as a signal peptide. Positions 20-31 (QLDTNYEVSDET) are excised as a propeptide. Residue histidine 151 is part of the active site. The interval 288–309 (FQGSRDKSSSENDEPPMKPRHS) is disordered. A propeptide spanning residues 292–429 (RDKSSSENDE…INEAIIKICG (138 aa)) is cleaved from the precursor.

This sequence belongs to the peptidase C13 family.

The catalysed reaction is Hydrolysis of proteins and small molecule substrates at -Asn-|-Xaa- bonds.. In terms of biological role, this protease is used by the parasite for degradation of the host globin. The protein is Hemoglobinase of Schistosoma mansoni (Blood fluke).